We begin with the raw amino-acid sequence, 255 residues long: MAADIRVFTCLSDNFGYLIHDPATGATASVDAPEAGPIVRQLEANGWTLTDILITHHHYDHVGGVAELKQRYGCRVIGPHDRKAAIADVDLRVAHGDVVKVGELLARVLETPGHTLDHVSYVFDADKAVFAADTLFSIGCGRVFEGTYPMMWDSLLKLRTLPDDFRLYCGHEYTASNVKFALTVDPDNEALKARAAEVTRLRAANQPTIPVLLGEEKQANVFLRADDPAIAVRLRMKGASAEEVFGELRERKNKS.

7 residues coordinate Zn(2+): histidine 56, histidine 58, aspartate 60, histidine 61, histidine 114, aspartate 133, and histidine 171.

It belongs to the metallo-beta-lactamase superfamily. Glyoxalase II family. As to quaternary structure, monomer. The cofactor is Zn(2+).

The catalysed reaction is an S-(2-hydroxyacyl)glutathione + H2O = a 2-hydroxy carboxylate + glutathione + H(+). Its pathway is secondary metabolite metabolism; methylglyoxal degradation; (R)-lactate from methylglyoxal: step 2/2. Thiolesterase that catalyzes the hydrolysis of S-D-lactoyl-glutathione to form glutathione and D-lactic acid. This Bradyrhizobium sp. (strain ORS 278) protein is Hydroxyacylglutathione hydrolase.